The primary structure comprises 183 residues: MDPSQNPNVFHATTIVCVRRGEHVAIAGDGQVTLGHTVMKGNARKVRRLGRDGQVLAGFAGAAADAFTLFELFEAKLEKHGQLQRAAVELAKDWRTERRLGKLEALLAVADKETSLIISGTGDVIEPEDGIIAIGSGGSYALSAARALMAHTELDARTIASEAIGIAGDICIYTNRNVVVEEL.

T13 is an active-site residue. Na(+) is bound by residues G168, C171, and T174.

This sequence belongs to the peptidase T1B family. HslV subfamily. As to quaternary structure, a double ring-shaped homohexamer of HslV is capped on each side by a ring-shaped HslU homohexamer. The assembly of the HslU/HslV complex is dependent on binding of ATP.

It localises to the cytoplasm. It catalyses the reaction ATP-dependent cleavage of peptide bonds with broad specificity.. Its activity is regulated as follows. Allosterically activated by HslU binding. Protease subunit of a proteasome-like degradation complex believed to be a general protein degrading machinery. The chain is ATP-dependent protease subunit HslV from Stenotrophomonas maltophilia (strain R551-3).